We begin with the raw amino-acid sequence, 70 residues long: DNA-directed RNA polymerase subunit epsilon (70 aa).

It belongs to the RNA polymerase subunit epsilon family. RNAP is composed of a core of 2 alpha, a beta and a beta' subunit. The core is associated with a delta subunit, and at least one of epsilon or omega. When a sigma factor is associated with the core the holoenzyme is formed, which can initiate transcription.

It carries out the reaction RNA(n) + a ribonucleoside 5'-triphosphate = RNA(n+1) + diphosphate. A non-essential component of RNA polymerase (RNAP). The polypeptide is DNA-directed RNA polymerase subunit epsilon (Bacillus cytotoxicus (strain DSM 22905 / CIP 110041 / 391-98 / NVH 391-98)).